The following is a 627-amino-acid chain: Pescadillo homolog (627 aa).

The region spanning 321 to 414 is the BRCT domain; sequence RLRTLFKGLK…QLLPTNKYFI (94 aa). 3 disordered regions span residues 450–469, 488–562, and 595–627; these read HVQSDDDSEDEAQEEEETVD, YKKF…LQAR, and TIEASEKEARKTAKREARKEAAAAAAKASKLGK. 2 positions are modified to phosphoserine: serine 453 and serine 457. Acidic residues-rich tracts occupy residues 454-469 and 497-521; these read DDDSEDEAQEEEETVD and VNEDEEDPEDDDDNEDDDEEEEELD. Residues 507–538 adopt a coiled-coil conformation; it reads DDDNEDDDEEEEELDEKTKRLQEEKQKMSVQS. Residues 522–533 are compositionally biased toward basic and acidic residues; it reads EKTKRLQEEKQK. Basic residues predominate over residues 540–549; sequence KVHKVNKRQV. Composition is skewed to basic and acidic residues over residues 550–559 and 595–615; these read HKAEVDEHRL and TIEASEKEARKTAKREARKEA. The stretch at 582–625 forms a coiled coil; it reads KEKEEWLLRKKRRTIEASEKEARKTAKREARKEAAAAAAKASKL. A compositionally biased stretch (low complexity) spans 616 to 627; the sequence is AAAAAKASKLGK.

The protein belongs to the pescadillo family.

The protein resides in the nucleus. The protein localises to the nucleolus. It localises to the nucleoplasm. In terms of biological role, required for maturation of ribosomal RNAs and formation of the large ribosomal subunit. The protein is Pescadillo homolog of Drosophila sechellia (Fruit fly).